The sequence spans 282 residues: Kallikrein-11 (282 aa).

Residues 1–50 (MQRLRWLRDWKSSGRGLTAAKEPGARSSPLQAMRILQLILLALATGLVGG) form the signal peptide. Positions 51–53 (ETR) are cleaved as a propeptide — activation peptide. Residues 53-280 (RIIKGFECKP…YVDWIQETMK (228 aa)) form the Peptidase S1 domain. 6 cysteine pairs are disulfide-bonded: Cys-60–Cys-195, Cys-79–Cys-95, Cys-167–Cys-269, Cys-174–Cys-241, Cys-206–Cys-220, and Cys-231–Cys-256. His-94 acts as the Charge relay system in catalysis. An N-linked (GlcNAc...) asparagine glycan is attached at Asn-131. Asp-142 (charge relay system) is an active-site residue. Asn-197 and Asn-213 each carry an N-linked (GlcNAc...) asparagine glycan. Catalysis depends on Ser-235, which acts as the Charge relay system. Asn-242 carries N-linked (GlcNAc...) asparagine glycosylation.

The protein belongs to the peptidase S1 family. Kallikrein subfamily. About 40% of KLK11 is inactivated by internal cleavage after Arg-188. This proteolytic inactivation may be effected by plasminogen. As to expression, expressed in brain, skin and prostate. Isoform 1 is expressed preferentially in brain. Isoform 2 is expressed in prostate. Present in seminal plasma at concentrations ranging from 2 to 37 microg/mL (at protein level).

It is found in the secreted. The protein resides in the golgi apparatus. Its function is as follows. Possible multifunctional protease. Efficiently cleaves 'bz-Phe-Arg-4-methylcoumaryl-7-amide', a kallikrein substrate, and weakly cleaves other substrates for kallikrein and trypsin. Cleaves synthetic peptides after arginine but not lysine residues. The polypeptide is Kallikrein-11 (KLK11) (Homo sapiens (Human)).